Reading from the N-terminus, the 297-residue chain is Large ribosomal subunit protein uL18 (297 aa).

Glycine 2 is subject to N-acetylglycine. Lysine 5 and lysine 48 each carry N6-acetyllysine. Residue serine 185 is modified to Phosphoserine. N6-acetyllysine; alternate is present on lysine 220. Residue lysine 220 forms a Glycyl lysine isopeptide (Lys-Gly) (interchain with G-Cter in SUMO1); alternate linkage. Residue lysine 220 forms a Glycyl lysine isopeptide (Lys-Gly) (interchain with G-Cter in SUMO2); alternate linkage. Phosphothreonine is present on threonine 232. A disordered region spans residues 253–297 (YEKKPKKEVKKKRWNRPKMSLAQKKDRVAQKKASFLRAQERAAES). A compositionally biased stretch (basic residues) spans 258 to 268 (KKEVKKKRWNR). The residue at position 272 (serine 272) is a Phosphoserine.

This sequence belongs to the universal ribosomal protein uL18 family. Component of the large ribosomal subunit (LSU). Part of the 5S RNP complex, which is a LSU subcomplex composed of the 5S RNA, RPL5 and RPL11. Component of a hexameric 5S RNP precursor complex, composed of 5S RNA, RRS1, RPF2/BXDC1, RPL5, RPL11 and HEATR3; this complex acts as a precursor for ribosome assembly. Interacts with isoform 1 of NVL in an ATP-dependent manner. Interacts with RRP1B. Interacts with IPO5, IPO7 and KPNB1; these interactions may be involved in RPL5 nuclear import for the assembly of ribosomal subunits.

The protein resides in the cytoplasm. It localises to the nucleus. It is found in the nucleolus. Its function is as follows. Component of the ribosome, a large ribonucleoprotein complex responsible for the synthesis of proteins in the cell. The small ribosomal subunit (SSU) binds messenger RNAs (mRNAs) and translates the encoded message by selecting cognate aminoacyl-transfer RNA (tRNA) molecules. The large subunit (LSU) contains the ribosomal catalytic site termed the peptidyl transferase center (PTC), which catalyzes the formation of peptide bonds, thereby polymerizing the amino acids delivered by tRNAs into a polypeptide chain. The nascent polypeptides leave the ribosome through a tunnel in the LSU and interact with protein factors that function in enzymatic processing, targeting, and the membrane insertion of nascent chains at the exit of the ribosomal tunnel. As part of the 5S RNP/5S ribonucleoprotein particle it is an essential component of the LSU, required for its formation and the maturation of rRNAs. It also couples ribosome biogenesis to p53/TP53 activation. As part of the 5S RNP it accumulates in the nucleoplasm and inhibits MDM2, when ribosome biogenesis is perturbed, mediating the stabilization and the activation of TP53. The polypeptide is Large ribosomal subunit protein uL18 (RPL5) (Homo sapiens (Human)).